We begin with the raw amino-acid sequence, 328 residues long: Beta-ketoacyl-[acyl-carrier-protein] synthase III (328 aa).

Residues Cys122 and His255 contribute to the active site. An ACP-binding region spans residues 256-260; the sequence is QANVR. Asn285 is an active-site residue.

The protein belongs to the thiolase-like superfamily. FabH family. As to quaternary structure, homodimer.

The protein localises to the cytoplasm. It carries out the reaction malonyl-[ACP] + acetyl-CoA + H(+) = 3-oxobutanoyl-[ACP] + CO2 + CoA. It functions in the pathway lipid metabolism; fatty acid biosynthesis. Catalyzes the condensation reaction of fatty acid synthesis by the addition to an acyl acceptor of two carbons from malonyl-ACP. Catalyzes the first condensation reaction which initiates fatty acid synthesis and may therefore play a role in governing the total rate of fatty acid production. Possesses both acetoacetyl-ACP synthase and acetyl transacylase activities. Its substrate specificity determines the biosynthesis of branched-chain and/or straight-chain of fatty acids. In Bordetella petrii (strain ATCC BAA-461 / DSM 12804 / CCUG 43448), this protein is Beta-ketoacyl-[acyl-carrier-protein] synthase III.